The sequence spans 619 residues: 4-hydroxyphenylalkanoate adenylyltransferase (619 aa).

This sequence belongs to the ATP-dependent AMP-binding enzyme family.

It carries out the reaction 17-(4-hydroxyphenyl)heptadecanoate + holo-[(phenol)carboxyphthiodiolenone synthase] + ATP = 17-(4-hydroxyphenyl)heptadecanoyl-[(phenol)carboxyphthiodiolenone synthase] + AMP + diphosphate. It catalyses the reaction 19-(4-hydroxyphenyl)nonadecanoate + holo-[(phenol)carboxyphthiodiolenone synthase] + ATP = 19-(4-hydroxyphenyl)nonadecanoyl-[(phenol)carboxyphthiodiolenone synthase] + AMP + diphosphate. Its pathway is lipid metabolism; fatty acid biosynthesis. Its function is as follows. Catalyzes the activation of long-chain fatty acids as acyl-adenylates (acyl-AMP), which are then transferred to the multifunctional polyketide synthase PpsA for further chain extension. Involved in the biosynthesis of phenolphthiocerol, which is an important intermediate in the biosynthesis of phenolic glycolipid (PGL), also called mycosid B. The sequence is that of 4-hydroxyphenylalkanoate adenylyltransferase (fadD29) from Mycobacterium bovis (strain ATCC BAA-935 / AF2122/97).